Consider the following 226-residue polypeptide: UPF0319 protein YPO1442/y2728/YP_1333 (226 aa).

The signal sequence occupies residues 1-20 (MKLGLVAGMLAVCFSFSSVA).

This sequence belongs to the UPF0319 family.

This chain is UPF0319 protein YPO1442/y2728/YP_1333, found in Yersinia pestis.